The following is a 95-amino-acid chain: Citrate lyase acyl carrier protein (95 aa).

At S14 the chain carries O-(phosphoribosyl dephospho-coenzyme A)serine.

It belongs to the CitD family. In terms of assembly, oligomer with a subunit composition of (alpha,beta,gamma)6.

It is found in the cytoplasm. Its function is as follows. Covalent carrier of the coenzyme of citrate lyase. This chain is Citrate lyase acyl carrier protein, found in Haemophilus influenzae (strain ATCC 51907 / DSM 11121 / KW20 / Rd).